The chain runs to 100 residues: Sweet protein mabinlin-4 (100 aa).

Disulfide bonds link C4/C49, C17/C38, C39/C87, and C51/C95.

It belongs to the 2S seed storage albumins family. As to quaternary structure, heterodimer of a small A and a large B chain linked by disulfide bonds.

In terms of biological role, heat stable 2S seed storage protein having sweetness-inducing activity. The sequence is that of Sweet protein mabinlin-4 from Capparis masaikai (Mabinlang).